The following is a 333-amino-acid chain: Casein kinase II subunit beta-1 (333 aa).

Residues 58-78 (VEPEDDDDEEEEDEEDEEDMS) are compositionally biased toward acidic residues. Disordered stretches follow at residues 58–92 (VEPE…ERRH) and 282–333 (ARRY…ESEL). The segment covering 305–316 (ASRRRGPPRRQK) has biased composition (basic residues).

It belongs to the casein kinase 2 subunit beta family. Tetramer composed of two alpha chains, one beta chain and one beta' chain. Post-translationally, phosphorylated by alpha subunit.

Regulatory subunit of casein kinase II/CK2. As part of the kinase complex regulates the basal catalytic activity of the alpha subunit a constitutively active serine/threonine-protein kinase that phosphorylates a large number of substrates containing acidic residues C-terminal to the phosphorylated serine or threonine. This Neurospora crassa (strain ATCC 24698 / 74-OR23-1A / CBS 708.71 / DSM 1257 / FGSC 987) protein is Casein kinase II subunit beta-1 (ckb-1).